A 416-amino-acid chain; its full sequence is MNQKLGLKDQDQEIFDLIEQEKIRQKENILLIASENFVSQAVLDAQGSILTNKYAEGYPQARYYNGCKNVDQIEKIAIQRATKLFGAKYANVQPHSGSQANMGAFQALLKPGDKILGLSLMDGGHLTHGHKLSFSGGFYEAHFYNVHPQTEMLDYDEIRKVALKVKPKLIIAGYSAYSKTINFKKFRQIADEVNAYLMADIAHIAGLVACGLHPCPFEANADVVTSTMHKTLRGPRGGLILTNKEEVFKKINRGIFPGIQGGPCIHTIAAKAVAFQEAMMPSFKEYQKQVIKNANTFAKAFQQKGYRIVSGGTDNHLFLIDVKHKNPEFTGSKIANMLEKINIVVNKNTIPFDQEKPFVTSGIRIGTPAMTTVGFRENDFILVADLMDKAINHLDDESYLAQIKQQVLALLSKFNK.

(6S)-5,6,7,8-tetrahydrofolate is bound by residues L120 and 124 to 126 (GHL). K230 is modified (N6-(pyridoxal phosphate)lysine). E246 contributes to the (6S)-5,6,7,8-tetrahydrofolate binding site.

This sequence belongs to the SHMT family. As to quaternary structure, homodimer. It depends on pyridoxal 5'-phosphate as a cofactor.

The protein localises to the cytoplasm. The enzyme catalyses (6R)-5,10-methylene-5,6,7,8-tetrahydrofolate + glycine + H2O = (6S)-5,6,7,8-tetrahydrofolate + L-serine. The protein operates within one-carbon metabolism; tetrahydrofolate interconversion. It functions in the pathway amino-acid biosynthesis; glycine biosynthesis; glycine from L-serine: step 1/1. In terms of biological role, catalyzes the reversible interconversion of serine and glycine with tetrahydrofolate (THF) serving as the one-carbon carrier. This reaction serves as the major source of one-carbon groups required for the biosynthesis of purines, thymidylate, methionine, and other important biomolecules. Also exhibits THF-independent aldolase activity toward beta-hydroxyamino acids, producing glycine and aldehydes, via a retro-aldol mechanism. The protein is Serine hydroxymethyltransferase of Onion yellows phytoplasma (strain OY-M).